We begin with the raw amino-acid sequence, 351 residues long: Nicotinate-nucleotide--dimethylbenzimidazole phosphoribosyltransferase (351 aa).

The active-site Proton acceptor is the glutamate 319.

The protein belongs to the CobT family.

The enzyme catalyses 5,6-dimethylbenzimidazole + nicotinate beta-D-ribonucleotide = alpha-ribazole 5'-phosphate + nicotinate + H(+). It functions in the pathway nucleoside biosynthesis; alpha-ribazole biosynthesis; alpha-ribazole from 5,6-dimethylbenzimidazole: step 1/2. Its function is as follows. Catalyzes the synthesis of alpha-ribazole-5'-phosphate from nicotinate mononucleotide (NAMN) and 5,6-dimethylbenzimidazole (DMB). This Desulforamulus reducens (strain ATCC BAA-1160 / DSM 100696 / MI-1) (Desulfotomaculum reducens) protein is Nicotinate-nucleotide--dimethylbenzimidazole phosphoribosyltransferase.